We begin with the raw amino-acid sequence, 620 residues long: MRDSNHRSLTSNKPIVTITSTVYDRRALDINSSIPLINSLNYLTYLTSNSSKVRETVANDGALERLVSILRSCHLSLFELLDLDLENFNEHENIKDLWKEKRLALCAWKWTLTFQCLVLTGTRGTEQIRKKVVMSGVLSVLVTVLDNYLLYHKNYDFIKDQTMTFDFKGITTETMYKFMRKDENETYQQYIEFITGQDKLKLSTDKNFLNERLVAPSMTIPTDFSDIWGRFADLASNFEPDQERHDDDIDIDSEVESENFDAHKNFFSQPDINRPTISTPREFFLGRIVPKQDDVIWSLQLLAFVSKYTYMKSTLQNVELVESLSFRSMAYKIKQRISEENDLEEQERDVTVKLSSLYPYLSKNPENNSKVKALDTSKMDPFFKELEELSNRCQQEEQNEICNNHCPVLNLFERYRVPKPSDDNAYGKDKERINLRKKISDNFERRWSYDKMKKELTNIVYKNKVLTNVVNIFPLVEKYTVSAENTHDVIYWSSVIMRNSCRKNEILGVRQCANFSCGKWEDFPRQFAKCRRCKRTKYCSRKCQLKAWGYHRYWCHEVGSSHMRSTNTTTGVNTPNEPSSLNATATTAADVSNSTSTFTPNISTTVPDEISNRDENSIPE.

The MYND-type; degenerate zinc finger occupies 514–555; the sequence is NFSCGKWEDFPRQFAKCRRCKRTKYCSRKCQLKAWGYHRYWC. Zn(2+) contacts are provided by Cys-530, Cys-533, His-551, and Cys-555. The segment covering 563 to 606 has biased composition (polar residues); the sequence is MRSTNTTTGVNTPNEPSSLNATATTAADVSNSTSTFTPNISTTV. The tract at residues 563–620 is disordered; that stretch reads MRSTNTTTGVNTPNEPSSLNATATTAADVSNSTSTFTPNISTTVPDEISNRDENSIPE. Residues 610-620 show a composition bias toward basic and acidic residues; the sequence is ISNRDENSIPE.

Belongs to the MUB1/samB family. In terms of assembly, interacts with UBR2 and RPN4.

It localises to the cytoplasm. In terms of biological role, involved in the determination of the onset of polarized growth. Required for the ubiquitin-dependent degradation of RPN4. Cooperates with UBR2 to transfer ubiquitin from RAD6 to RPN4. The protein is MYND-type zinc finger protein MUB1 (MUB1) of Saccharomyces cerevisiae (strain ATCC 204508 / S288c) (Baker's yeast).